Consider the following 428-residue polypeptide: GTPase Obg (428 aa).

The Obg domain maps to 1-158 (MFVDQVKIYV…RDVILELKVL (158 aa)). Residues 117 to 145 (ARGGRGGRGNSRFATPTNPAPEIAENGEP) are disordered. Positions 159–329 (ADVGLVGFPS…LLFEVANLLE (171 aa)) constitute an OBG-type G domain. Residues 165–172 (GFPSVGKS), 190–194 (FTTIV), 212–215 (DLPG), 282–285 (NKMD), and 310–312 (SAV) contribute to the GTP site. Residues S172 and T192 each contribute to the Mg(2+) site. Residues 350–428 (KLETEGVKFD…ILEYEFEFID (79 aa)) form the OCT domain.

Belongs to the TRAFAC class OBG-HflX-like GTPase superfamily. OBG GTPase family. In terms of assembly, monomer. It depends on Mg(2+) as a cofactor.

It is found in the cytoplasm. Its function is as follows. An essential GTPase which binds GTP, GDP and possibly (p)ppGpp with moderate affinity, with high nucleotide exchange rates and a fairly low GTP hydrolysis rate. Plays a role in control of the cell cycle, stress response, ribosome biogenesis and in those bacteria that undergo differentiation, in morphogenesis control. The sequence is that of GTPase Obg from Bacillus cereus (strain ATCC 10987 / NRS 248).